The sequence spans 471 residues: Glutamate--tRNA ligase (471 aa).

A 'HIGH' region motif is present at residues 9–19; it reads PSPTGYLHVGG. Positions 98, 100, 125, and 127 each coordinate Zn(2+). A 'KMSKS' region motif is present at residues 237–241; sequence KLSKR. An ATP-binding site is contributed by Lys240.

It belongs to the class-I aminoacyl-tRNA synthetase family. Glutamate--tRNA ligase type 1 subfamily. As to quaternary structure, monomer. Zn(2+) serves as cofactor.

It localises to the cytoplasm. It catalyses the reaction tRNA(Glu) + L-glutamate + ATP = L-glutamyl-tRNA(Glu) + AMP + diphosphate. In terms of biological role, catalyzes the attachment of glutamate to tRNA(Glu) in a two-step reaction: glutamate is first activated by ATP to form Glu-AMP and then transferred to the acceptor end of tRNA(Glu). In Shigella dysenteriae serotype 1 (strain Sd197), this protein is Glutamate--tRNA ligase.